Reading from the N-terminus, the 1150-residue chain is Cohesin subunit SCC3 (1150 aa).

Basic residues predominate over residues 1–12 (MTAVRRSTRIRT). Positions 1 to 122 (MTAVRRSTRI…PAYHRSKKDQ (122 aa)) are disordered. Residue S28 is modified to Phosphoserine. Residues 32 to 43 (VESDKITAKTQH) show a composition bias toward basic and acidic residues. Over residues 44–72 (EEEEEQDTGESEESSSEDDYEDQDDDDYV) the composition is skewed to acidic residues. The segment covering 77–87 (AKRKSRKRKPK) has biased composition (basic residues). Positions 305–349 (LTQQAVNLEKNYLAKLSKQLSLEEKKKRPNNKTLEKLESTIAETQ) form a coiled coil. One can recognise an SCD domain in the interval 367–457 (FVHRYKDVSD…ERFKTKILEV (91 aa)). S628 carries the phosphoserine modification. Residues 1065–1150 (ENPEPNKKNI…IDNSDEITQD (86 aa)) are disordered. Over residues 1083–1101 (QREKAPLQPNSERETDHAN) the composition is skewed to basic and acidic residues.

This sequence belongs to the SCC3 family. As to quaternary structure, interacts directly with MCD1 in cohesin complex. Cohesin complexes are composed of the SMC1 and SMC3 heterodimer attached via their hinge domain, MCD1 which link them, and IRR1/SCC3, which interacts with MCD1. The cohesin complex also interacts with SCC2, which is required for its association with chromosomes. Interacts with LIN1. In terms of processing, acetylated by ECO1.

Its subcellular location is the nucleus. The protein localises to the chromosome. It localises to the centromere. Functionally, component of cohesin complex, a complex required for the cohesion of sister chromatids after DNA replication. The cohesin complex apparently forms a large proteinaceous ring within which sister chromatids can be trapped. At anaphase, the MCD1/SCC1 subunit of the complex is cleaved and dissociates from chromatin, allowing sister chromatids to segregate. The cohesin complex may also play a role in spindle pole assembly during mitosis. This chain is Cohesin subunit SCC3 (IRR1), found in Saccharomyces cerevisiae (strain ATCC 204508 / S288c) (Baker's yeast).